We begin with the raw amino-acid sequence, 260 residues long: Carbonic anhydrase 3 (260 aa).

The residue at position 2 (Ala-2) is an N-acetylalanine. In terms of domain architecture, Alpha-carbonic anhydrase spans 3–259; it reads KEWGYASHNG…INNRVVRASF (257 aa). Phosphoserine is present on residues Ser-29, Ser-43, Ser-48, Ser-50, and Ser-55. The segment at 64-67 is involved in proton transfer; it reads KTCR. Thr-73 bears the Phosphothreonine mark. 3 residues coordinate Zn(2+): His-94, His-96, and His-119. Tyr-127 is subject to Phosphotyrosine. Phosphothreonine is present on residues Thr-129 and Thr-176. 2 positions are modified to S-glutathionyl cysteine: Cys-182 and Cys-187. 198–199 lines the substrate pocket; that stretch reads TT. A Phosphothreonine modification is found at Thr-216. The residue at position 219 (Ser-219) is a Phosphoserine.

The protein belongs to the alpha-carbonic anhydrase family. Zn(2+) serves as cofactor. S-thiolated both by thiol-disulfide exchange with glutathione disulfide and by oxyradical-initiated S-thiolation with reduced glutathione. Post-translationally, S-glutathionylated in hepatocytes under oxidative stress. In terms of tissue distribution, muscle specific.

Its subcellular location is the cytoplasm. The catalysed reaction is hydrogencarbonate + H(+) = CO2 + H2O. Its activity is regulated as follows. Activated by proton donors such as imidazole and the dipeptide histidylhistidine. Inhibited by coumarins and sulfonamide derivatives such as acetazolamide. Functionally, reversible hydration of carbon dioxide. This Homo sapiens (Human) protein is Carbonic anhydrase 3.